A 329-amino-acid polypeptide reads, in one-letter code: Ribonucleoside-diphosphate reductase small chain (329 aa).

Fe cation-binding residues include D75, E106, and H109. Y113 is an active-site residue. Residues E168, E202, and H205 each coordinate Fe cation.

This sequence belongs to the ribonucleoside diphosphate reductase small chain family. As to quaternary structure, heterodimer of a large and a small chain. Requires Fe cation as cofactor.

The protein resides in the cytoplasm. It carries out the reaction a 2'-deoxyribonucleoside 5'-diphosphate + [thioredoxin]-disulfide + H2O = a ribonucleoside 5'-diphosphate + [thioredoxin]-dithiol. Functionally, provides the precursors necessary for DNA synthesis. Catalyzes the biosynthesis of deoxyribonucleotides from the corresponding ribonucleotides. The sequence is that of Ribonucleoside-diphosphate reductase small chain from Nicotiana tabacum (Common tobacco).